The sequence spans 579 residues: MADITEKTAEQLENLSLQDKQEGTNEENQSETVSASLYVGDLDPSVSEAHLYDIFSPIGAVSSIRVCRDAITKTSLGYAYVNFNDHDAAKTAIEKLNFTPIKGKLCRIMWSQRDPSLRKKGAGNIFIKNLHPDIDNKALYDTFSVFGNILSSKVATDETGKSKGFGYVHFEEDESASEAIDALNGMLLNGQEIYVGPHLSKKERESKFEEMKANFTNVYIKNINTETTDKEFEELVAKFGKTDSVVLERTPEGENKGFGFVNFVNHEDAVKCVEELNNTEFKGQPLYVNRAQKKYERQQELKKQYEATRMEKMAKYQGINLFIKNLDDSIDDKKLEEEFAPYGTITSAKVMTTENGKSKGFGFVCFSTPEEATKAITEKNQQIVAGKPLYVAIAQRKDVRRSQLAQQIQARNQMRFQQASAAAAAAAAAGMPGQFMPPMFYGVMPPRGVPFNGPNPQMANMGAMPKNGMPPHQFRNGPVYGVPPQGGFARNGPAANQFYQQKQRQALGEELYKRIFSRTNDEEAAGKITGMILDLPPQEVVPLLENDELFEQHFKEASAAYESFKQEQQQPQGEEAQQA.

Over residues 1–10 (MADITEKTAE) the composition is skewed to basic and acidic residues. A disordered region spans residues 1–32 (MADITEKTAEQLENLSLQDKQEGTNEENQSET). RRM domains follow at residues 35–113 (ASLY…WSQR), 123–200 (GNIF…PHLS), 216–293 (TNVY…RAQK), and 319–396 (INLF…IAQR). In terms of domain architecture, PABC spans 487 to 566 (GFARNGPAAN…ASAAYESFKQ (80 aa)). Positions 560 to 579 (AYESFKQEQQQPQGEEAQQA) are disordered. Low complexity predominate over residues 566–579 (QEQQQPQGEEAQQA).

Belongs to the polyadenylate-binding protein type-1 family.

Its subcellular location is the cytoplasm. It is found in the nucleus. Binds the poly(A) tail of mRNA. Appears to be an important mediator of the multiple roles of the poly(A) tail in mRNA biogenesis, stability and translation. In the nucleus, involved in both mRNA cleavage and polyadenylation. Is also required for efficient mRNA export to the cytoplasm. Acts in concert with a poly(A)-specific nuclease (PAN) to affect poly(A) tail shortening, which may occur concomitantly with either nucleocytoplasmic mRNA transport or translational initiation. In the cytoplasm, stimulates translation initiation and regulates mRNA decay through translation termination-coupled poly(A) shortening, probably mediated by PAN. The protein is Polyadenylate-binding protein, cytoplasmic and nuclear (PAB1) of Candida glabrata (strain ATCC 2001 / BCRC 20586 / JCM 3761 / NBRC 0622 / NRRL Y-65 / CBS 138) (Yeast).